Reading from the N-terminus, the 214-residue chain is uncharacterized protein (214 aa).

The helical transmembrane segment at 10–30 threads the bilayer; that stretch reads LLLAGIGGFMVGGLASWVVSS. A compositionally biased stretch (polar residues) spans 147 to 157; sequence SSQANSQSTQP. Residues 147–166 are disordered; it reads SSQANSQSTQPRDPIPTENF.

The protein localises to the membrane. This is an uncharacterized protein from Schizosaccharomyces pombe (strain 972 / ATCC 24843) (Fission yeast).